Consider the following 191-residue polypeptide: MKALSPIAVLISALLLQGCVAAAVVGTAAVGTKAATDPRSVGTQVDDGTLEVRVNSALSKDEQIKKEARINVTAYQGKVLLVGQSPNAELSARAKQIAMGVDGANEVYNEIRQGQPIGLGEASNDTWITTKVRSQLLTSDLVKSSNVKVTTENGEVFLMGLVTEREAKAAADIASRVSGVKRVTTAFTFIK.

A signal peptide spans 1–18; that stretch reads MKALSPIAVLISALLLQG. The N-palmitoyl cysteine moiety is linked to residue cysteine 19. Cysteine 19 carries the S-diacylglycerol cysteine lipid modification. BON domains are found at residues 46 to 115 and 124 to 191; these read DDGT…RQGQ and NDTW…TFIK.

Belongs to the lipoprotein DolP family.

The protein resides in the cell outer membrane. Its function is as follows. Plays an important role in maintaining outer membrane integrity. In Escherichia coli O157:H7, this protein is Outer membrane lipoprotein DolP.